The primary structure comprises 181 residues: Large ribosomal subunit protein uL10 (181 aa).

It belongs to the universal ribosomal protein uL10 family. In terms of assembly, part of the ribosomal stalk of the 50S ribosomal subunit. The N-terminus interacts with L11 and the large rRNA to form the base of the stalk. The C-terminus forms an elongated spine to which L12 dimers bind in a sequential fashion forming a multimeric L10(L12)X complex.

In terms of biological role, forms part of the ribosomal stalk, playing a central role in the interaction of the ribosome with GTP-bound translation factors. This is Large ribosomal subunit protein uL10 from Protochlamydia amoebophila (strain UWE25).